The primary structure comprises 952 residues: ALS2 C-terminal-like protein (952 aa).

8 MORN repeats span residues 358 to 380 (YDGEWCRAKPHGKGTLKWPDGRN), 381 to 403 (HVGTFYQGLEHGFGICLVPQASE), 409 to 431 (YKCHWREGRMCEYGICEYGTDEV), 432 to 454 (YKGYFQAGLRHGFGILESAPQAP), 459 to 481 (YTGHWERGQRSGYGIEEDRDRGE), 483 to 505 (YIGMWQADQRHGPGVVVTQAGVC), 506 to 528 (YQGTFQGDKMAGPGILLCEDDSL), and 529 to 552 (YEGTFTRDLTLLGKGKVTFPNGFT). Residues 795-941 (LFPDTKLLEF…IQKEDMRPHH (147 aa)) form the VPS9 domain.

In terms of assembly, homodimer. Forms a heteromeric complex with ALS2. Interacts with ALS2 and RAB5A. Expressed in heart, lung, liver and kidney.

The protein resides in the cytoplasm. Its function is as follows. Acts as a guanine nucleotide exchange factor (GEF) for Rab5 GTPase. Regulates the ALS2-mediated endosome dynamics. This Mus musculus (Mouse) protein is ALS2 C-terminal-like protein (Als2cl).